A 108-amino-acid polypeptide reads, in one-letter code: uncharacterized protein (108 aa).

The span at 39-68 (GLRSRSGTGSGNSRNGLKESGGSRSGPGKP) shows a compositional bias: low complexity. A disordered region spans residues 39 to 95 (GLRSRSGTGSGNSRNGLKESGGSRSGPGKPRGNRKSSRRIRPRPTSEKPRGYWRSSW). Positions 69–80 (RGNRKSSRRIRP) are enriched in basic residues.

This is an uncharacterized protein from Acidithiobacillus ferridurans.